We begin with the raw amino-acid sequence, 722 residues long: MVRYMVTSALPYANGPIHAGHLAGAYLPADIFVRYLRLKGEDVVFICGTDEHGTPISFRALKEGRSPREIVDEFHEQIKITFQRAKISFDFFGRTELPIHYKLSQEFFLKAYENGHLVKKVTKQAYCEHDKMFLPDRFVIGTCPYCGAEDQKGDQCEVCGRPLTPEILINPRCAICGRPISFRDSAHYYIKMQDFAERLKRWIEKQPWKPNVKNMVLSWIEEGLEERAITRDLNWGIPVPLDEEDMKGKVLYVWFEAPIGYISITIEHFKRIGKPNEWKKYWLNIDGQTRVIHFIGKDNIPFHAIFWPAFLMAYGKYKDEEVEAEWNLPYDIPANEYLTLEGKKFSTSRNWAIWVHEFLDVFPADYLRYYLTTIMPETRDSDFSFSDFKVRINEELVNNLGNFVHRALTFVNRYFDGVVPERGELDELDREALEEIEKAFKEVGELIMNYRFKDALKRVMSLASFGNRYFDHKQPWKTAKEDKVRTGTTVNISLQIVKALGILLEPFLPDASEKIWHLLNLDEVKRWEFRELPAGHKVRKPEILFKKVTDDQIIYFILNYMAKGNPEGARILLDKYYKREDVIRVAKEKFGDEAEVVLRRVYKDIKLKEKKEGKEMYVKFDDFAKLDLRVGKIIEVKDHPNADKLYVVKVDLGDEVRTLVAGLKKYYKPEELLNRYVVVVANLEPKKLRGIGSQGMLLAADDGERVALLMPDKEVKLGAKVR.

Residues 11–21 (PYANGPIHAGH) carry the 'HIGH' region motif. Zn(2+)-binding residues include cysteine 143, cysteine 146, cysteine 156, and cysteine 159. The short motif at 344 to 348 (KFSTS) is the 'KMSKS' region element. Threonine 347 is an ATP binding site. The tRNA-binding domain occupies 622–722 (DFAKLDLRVG…KEVKLGAKVR (101 aa)).

Belongs to the class-I aminoacyl-tRNA synthetase family. MetG type 1 subfamily. In terms of assembly, homodimer. Requires Zn(2+) as cofactor.

Its subcellular location is the cytoplasm. It carries out the reaction tRNA(Met) + L-methionine + ATP = L-methionyl-tRNA(Met) + AMP + diphosphate. Is required not only for elongation of protein synthesis but also for the initiation of all mRNA translation through initiator tRNA(fMet) aminoacylation. This chain is Methionine--tRNA ligase, found in Pyrococcus abyssi (strain GE5 / Orsay).